The primary structure comprises 122 residues: S-adenosylmethionine decarboxylase proenzyme (122 aa).

Residue Ser63 is the Schiff-base intermediate with substrate; via pyruvic acid of the active site. Ser63 bears the Pyruvic acid (Ser); by autocatalysis mark. His68 (proton acceptor; for processing activity) is an active-site residue. The active-site Proton donor; for catalytic activity is the Cys83.

The protein belongs to the prokaryotic AdoMetDC family. Type 1 subfamily. In terms of assembly, heterotetramer of two alpha and two beta chains arranged as a dimer of alpha/beta heterodimers. Pyruvate is required as a cofactor. In terms of processing, is synthesized initially as an inactive proenzyme. Formation of the active enzyme involves a self-maturation process in which the active site pyruvoyl group is generated from an internal serine residue via an autocatalytic post-translational modification. Two non-identical subunits are generated from the proenzyme in this reaction, and the pyruvate is formed at the N-terminus of the alpha chain, which is derived from the carboxyl end of the proenzyme. The post-translation cleavage follows an unusual pathway, termed non-hydrolytic serinolysis, in which the side chain hydroxyl group of the serine supplies its oxygen atom to form the C-terminus of the beta chain, while the remainder of the serine residue undergoes an oxidative deamination to produce ammonia and the pyruvoyl group blocking the N-terminus of the alpha chain.

It carries out the reaction S-adenosyl-L-methionine + H(+) = S-adenosyl 3-(methylsulfanyl)propylamine + CO2. It participates in amine and polyamine biosynthesis; S-adenosylmethioninamine biosynthesis; S-adenosylmethioninamine from S-adenosyl-L-methionine: step 1/1. Functionally, catalyzes the decarboxylation of S-adenosylmethionine to S-adenosylmethioninamine (dcAdoMet), the propylamine donor required for the synthesis of the polyamines spermine and spermidine from the diamine putrescine. The polypeptide is S-adenosylmethionine decarboxylase proenzyme (Methanococcus vannielii (strain ATCC 35089 / DSM 1224 / JCM 13029 / OCM 148 / SB)).